The chain runs to 149 residues: MASSASSVFAAFDKDGDGKVSASELRGCMAAALGEEVSEEEAAAILATADTDGDGLLDHHEFMRLSAAHQLQEPAEESLRCLREAFDMYAEEEETAVITPASLRRMLRRLGSEHQRLEMEECRAMICRFDLNGDGVLSFDEFRVMMLMA.

4 consecutive EF-hand domains span residues 1-35 (MASS…ALGE), 37-72 (VSEE…HQLQ), 77-113 (ESLR…LGSE), and 117-149 (LEME…MLMA). Positions 13, 15, 17, 19, 24, 50, 52, 54, and 61 each coordinate Ca(2+). Ca(2+)-binding residues include Asp-130, Asn-132, Asp-134, and Glu-141.

Functionally, potential calcium sensor. This is Probable calcium-binding protein CML25/26 (CML25) from Oryza sativa subsp. japonica (Rice).